Reading from the N-terminus, the 465-residue chain is Probable citrate synthase, mitochondrial (465 aa).

Residues histidine 303, histidine 349, and aspartate 404 contribute to the active site.

The protein belongs to the citrate synthase family. In terms of assembly, homodimer.

The protein resides in the mitochondrion matrix. The enzyme catalyses oxaloacetate + acetyl-CoA + H2O = citrate + CoA + H(+). The protein operates within carbohydrate metabolism; tricarboxylic acid cycle; isocitrate from oxaloacetate: step 1/2. The protein is Probable citrate synthase, mitochondrial of Glossina morsitans morsitans (Savannah tsetse fly).